We begin with the raw amino-acid sequence, 137 residues long: Profilin-3 (137 aa).

Belongs to the profilin family. As to quaternary structure, interacts with ACTRT3.

The protein resides in the cytoplasm. The protein localises to the cytoskeleton. It localises to the nucleus. In terms of biological role, binds to actin and affects the structure of the cytoskeleton. Binds to poly-L-proline, phosphatidylinositol 3-phosphate (PtdIns(3)P), phosphatidylinositol 4,5-bisphosphate (PtdIns(4,5)P2) and phosphatidylinositol 4-phosphate (PtdIns(4)P). Slightly reduces actin polymerization. May be involved in spermatogenesis. The sequence is that of Profilin-3 (PFN3) from Bos taurus (Bovine).